The chain runs to 641 residues: Bifunctional protein glk (641 aa).

The segment at 1 to 21 (MSTGAQTKAAEASQHADGPRL) is disordered. The glucokinase stretch occupies residues 1–340 (MSTGAQTKAA…QLSNRTGGAS (340 aa)). Residue 23–28 (ADVGGT) coordinates ATP. Residues 341–417 (SAVFERIRQM…LKLATGLTGT (77 aa)) enclose the HTH rpiR-type domain. Residues 341 to 641 (SAVFERIRQM…SHGAAPAAKE (301 aa)) are putative HTH-type transcriptional regulator. A DNA-binding region (H-T-H motif) is located at residues 377–396 (IVDIARKADVSQPTVIRFCR). An SIS domain is found at 461-600 (AIDILNNARR…AVGVAIRRAS (140 aa)). The helical transmembrane segment at 576–596 (SMISRILHLVMIDILAVGVAI) threads the bilayer.

This sequence in the N-terminal section; belongs to the bacterial glucokinase family.

The protein localises to the membrane. It carries out the reaction D-glucose + ATP = D-glucose 6-phosphate + ADP + H(+). This Burkholderia thailandensis (strain ATCC 700388 / DSM 13276 / CCUG 48851 / CIP 106301 / E264) protein is Bifunctional protein glk (glk).